Consider the following 225-residue polypeptide: Membrane protein (225 aa).

At 1–20 (MSNETNCTLDFEQSVELFKE) the chain is on the virion surface side. Residues 21–41 (YNLFITAFLLFLTIILQYGYA) traverse the membrane as a helical segment. The Intravirion portion of the chain corresponds to 42–51 (TRSKFIYILK). The helical transmembrane segment at 52–72 (MIVLWCFWPLNIAVGVISCIY) threads the bilayer. Over 73–77 (PPNTG) the chain is Virion surface. Residues 78–98 (GLVAAIILTVFACLSFVGYWI) traverse the membrane as a helical segment. Over 99–225 (QSIRLFKRCR…VATGGSSLYT (127 aa)) the chain is Intravirion.

The protein belongs to the gammacoronaviruses M protein family. As to quaternary structure, homomultimer. Interacts with envelope E protein in the budding compartment of the host cell, which is located between endoplasmic reticulum and the Golgi complex. Forms a complex with HE and S proteins. Interacts with nucleocapsid N protein. This interaction probably participates in RNA packaging into the virus.

It is found in the virion membrane. Its subcellular location is the host Golgi apparatus membrane. In terms of biological role, component of the viral envelope that plays a central role in virus morphogenesis and assembly via its interactions with other viral proteins. This Gallus gallus (Chicken) protein is Membrane protein.